Reading from the N-terminus, the 452-residue chain is Major royal jelly protein 2 (452 aa).

Positions Met1–Gly17 are cleaved as a signal peptide. Residues Asn145 and Asn178 are each glycosylated (N-linked (GlcNAc...) asparagine). Positions Asn416–Asn452 are disordered.

In terms of processing, N-linked core structure contains mannose (which consists of 8-alpha-mannosyl residues, one beta-mannosyl residue, and chitobiose). Secreted from the hypopharyngeal glands of the worker honey bee (at protein level); expression peaks at 12 days post eclosion. Expressed in the brains of adult worker bees peaking at 12 days post eclosion (at protein level). Expressed in the spermatheca of adult queen bees (at protein level); Expression levels are higher in mated queens than in virgin queens.

The protein resides in the secreted. In terms of biological role, highly abundant protein component of royal jelly, a substance produced in the hypopharyngeal gland containing proteins, free amino acids, fatty acids, sugars and other nutrients, which is fed to developing larvae by worker nurse bees. Major royal jelly proteins (MRJPs) are high in essential amino acids and probably have a nutritional function in larval food. All larvae are fed some royal jelly (also known as worker jelly) early in their development but it forms the principal source of nutrition for larvae destined to become queen bees. Produced in the spermatheca of adult queen bees, along with other major royal jelly proteins, where it may act as a nutrient supply for sperm stored by mated queens, or be involved in energy metabolism. This Apis mellifera (Honeybee) protein is Major royal jelly protein 2.